Here is a 377-residue protein sequence, read N- to C-terminus: 23S rRNA (uracil(747)-C(5))-methyltransferase RlmC (377 aa).

Positions 3, 11, 14, and 87 each coordinate [4Fe-4S] cluster. S-adenosyl-L-methionine contacts are provided by Gln-212, Phe-241, Glu-262, and Asn-307. The active-site Nucleophile is the Cys-334.

This sequence belongs to the class I-like SAM-binding methyltransferase superfamily. RNA M5U methyltransferase family. RlmC subfamily.

The enzyme catalyses uridine(747) in 23S rRNA + S-adenosyl-L-methionine = 5-methyluridine(747) in 23S rRNA + S-adenosyl-L-homocysteine + H(+). In terms of biological role, catalyzes the formation of 5-methyl-uridine at position 747 (m5U747) in 23S rRNA. This Xenorhabdus bovienii (strain SS-2004) (Xenorhabdus nematophila subsp. bovienii) protein is 23S rRNA (uracil(747)-C(5))-methyltransferase RlmC.